A 714-amino-acid polypeptide reads, in one-letter code: MFNTHKVEIEWGGRPLTLETGKIARQADGAVLATYGETAVLATVVSAKEPKPGQDFFPLTVNYQEKTYAAGKIPGGYFKREGRPSENETLVSRLIDRPIRPLFVDGYKNDTQVVITVLQHDLENNPDILSMVAASAALTISGVPFMGPISGARVGYIDGEYVLNPNIDEMPESKLDLVVAGTSEAVLMVESEAQELPEDVMLGAVMFGHKSFQPVIDAIIKLAEVAAKEPRDFQPEDLSELEAKVLAVVENDLREAYKITEKQARYAAVDAAKAKAEEHFFPEGVEETEMSAEQFATIFKHLQAKIVRWNILDTGNRIDGRDLSTVRPIVSEVGILPRTHGSALFTRGETQAIVVATLGTGEDEQMIDALTGTYKESFMLHYNFPPYSVGETGRMGSPGRREIGHGKLAWRAIHPMLPAAEQFPYTIRAVSEITESNGSSSMATVCGTSLALMDAGVPIVRPVAGIAMGLIKEGERFAVLSDILGDEDHLGDMDFKVAGTEFGITSLQMDIKIDGITEEIMKVALEQAKGGRVHILGEMAKAISSSRAELGEFAPRIEVMNIPTDKIRDVIGSGGKVIREIVEKTGAKINIEDDGTVKIASSNGKEIEAAKKWIHSIVAEPEVGEIYEGTVVKTADFGAFVNFFGPRDGLVHISQLAADRVAKTTDVVKEGQKVWVKLMGFDERGKVRLSMKVVDQETGKEIVAEKKKEEVDAE.

The Mg(2+) site is built by Asp-488 and Asp-494. A KH domain is found at 555–614 (PRIEVMNIPTDKIRDVIGSGGKVIREIVEKTGAKINIEDDGTVKIASSNGKEIEAAKKWI). The S1 motif domain maps to 624–692 (GEIYEGTVVK…ERGKVRLSMK (69 aa)).

The protein belongs to the polyribonucleotide nucleotidyltransferase family. It depends on Mg(2+) as a cofactor.

It localises to the cytoplasm. The catalysed reaction is RNA(n+1) + phosphate = RNA(n) + a ribonucleoside 5'-diphosphate. Involved in mRNA degradation. Catalyzes the phosphorolysis of single-stranded polyribonucleotides processively in the 3'- to 5'-direction. This Brucella melitensis biotype 2 (strain ATCC 23457) protein is Polyribonucleotide nucleotidyltransferase.